A 1684-amino-acid polypeptide reads, in one-letter code: A-kinase anchor protein 12 (1684 aa).

A disordered region spans residues Met1–Thr124. Gly2 carries the N-myristoyl glycine lipid modification. Phosphoserine is present on residues Ser11, Ser18, Ser22, and Ser27. Residues Gly30–Ala48 are compositionally biased toward low complexity. Acidic residues predominate over residues Glu75 to Val86. The segment covering Val89–Glu105 has biased composition (basic and acidic residues). Ser136 carries the post-translational modification Phosphoserine. Disordered stretches follow at residues Ser175–Ser281 and Lys296–Tyr353. Basic and acidic residues predominate over residues Ala212–Gly227. Over residues Thr228 to Gly247 the composition is skewed to polar residues. Phosphoserine occurs at positions 234 and 244. Residues Glu251–Lys266 show a composition bias toward basic and acidic residues. Positions Ala253 to Ser543 are involved in PKC-binding. 2 positions are modified to phosphoserine: Ser270 and Ser273. A compositionally biased stretch (polar residues) spans Ser270–Ser281. The span at Lys302–Glu320 shows a compositional bias: basic and acidic residues. The segment covering Lys321 to Glu342 has biased composition (acidic residues). The residue at position 330 (Thr330) is a Phosphothreonine. Ser350 is modified (phosphoserine). Tyr353 carries the phosphotyrosine modification. Phosphoserine occurs at positions 371 and 467. The disordered stretch occupies residues Gly421–Gly479. Residues Pro468 to Glu478 are compositionally biased toward basic and acidic residues. Residues Ser489, Ser505, and Ser507 each carry the phosphoserine modification. The segment at Arg492–Ala825 is disordered. Residues Gly497–Lys511 show a composition bias toward low complexity. Residues Leu512–Arg521 are compositionally biased toward basic residues. Phosphoserine is present on residues Ser540, Ser543, Ser584, Ser598, Ser613, and Ser615. Positions Ile593–Ser613 match the AKAP CaM-binding 1 motif. A compositionally biased stretch (basic and acidic residues) spans Arg611–Lys625. Low complexity predominate over residues Ser626–Ser637. Thr628 is subject to Phosphothreonine. Ser630, Ser631, Ser634, and Ser637 each carry phosphoserine. Basic and acidic residues predominate over residues Asp641 to Asp660. A phosphoserine mark is found at Ser682, Ser683, and Ser684. Over residues Asp696 to Asp710 the composition is skewed to basic and acidic residues. Polar residues predominate over residues Ala714–His723. A compositionally biased stretch (low complexity) spans Gly724 to Ser741. Residues Ser733, Ser745, Ser767, and Ser786 each carry the phosphoserine modification. The AKAP CaM-binding 2 motif lies at Val740–Leu760. Positions Glu781–Gly801 match the AKAP CaM-binding 3 motif. Residue Thr871 is modified to Phosphothreonine. Ser873 is subject to Phosphoserine. Residues Thr970 to Val1001 are disordered. Polar residues predominate over residues Asp980–Pro992. Lys1030 is covalently cross-linked (Glycyl lysine isopeptide (Lys-Gly) (interchain with G-Cter in SUMO1)). 4 disordered regions span residues Val1055–Asp1106, Leu1121–Glu1211, Glu1232–Asp1365, and Thr1391–Ile1492. Ser1059 is modified (phosphoserine). Polar residues predominate over residues Ser1130 to Val1176. Composition is skewed to basic and acidic residues over residues Gln1198–Leu1210 and Asp1239–Val1254. A Phosphoserine modification is found at Ser1292. Positions Pro1293–His1331 are enriched in basic and acidic residues. Phosphoserine is present on residues Ser1351, Ser1355, and Ser1357. Over residues Gln1467–Ile1492 the composition is skewed to basic and acidic residues. The tract at residues Glu1501 to Ile1514 is RII-binding. A phosphoserine mark is found at Ser1546 and Ser1645. Positions Thr1568–Ser1684 are disordered. Residues Leu1653–Ser1684 show a composition bias toward basic and acidic residues.

In terms of assembly, binds to dimeric RII-alpha regulatory subunit of PKC. In terms of tissue distribution, isoform 1 is predominantly found in the nervous system. Isoform 3 is testis specific.

Its subcellular location is the cytoplasm. The protein localises to the cytoskeleton. It is found in the membrane. Functionally, anchoring protein that mediates the subcellular compartmentation of protein kinase A (PKA) and protein kinase C (PKC). In Mus musculus (Mouse), this protein is A-kinase anchor protein 12 (Akap12).